The primary structure comprises 111 residues: High mobility group protein Z (111 aa).

The HMG box DNA-binding region spans 6-72 (PKRPLSAYML…EYNKAVKEYE (67 aa)). Position 11 is a phosphoserine (Ser11). The segment at 72 to 111 (EANGGTDSGAPKKRKKAAAKPAKKAKKKESSEEEEEDESE) is disordered. Basic residues predominate over residues 82-98 (PKKRKKAAAKPAKKAKK). Residues 102 to 111 (SEEEEEDESE) are compositionally biased toward acidic residues.

Belongs to the HMGB family.

The protein resides in the nucleus. It is found in the chromosome. This is High mobility group protein Z (HmgZ) from Drosophila melanogaster (Fruit fly).